The primary structure comprises 650 residues: uncharacterized protein (650 aa).

This sequence belongs to the MG032/MG096/MG288 family.

This is an uncharacterized protein from Mycoplasma genitalium (strain ATCC 33530 / DSM 19775 / NCTC 10195 / G37) (Mycoplasmoides genitalium).